A 417-amino-acid chain; its full sequence is Cell division protein FtsA (417 aa).

It belongs to the FtsA/MreB family. Self-interacts. Interacts with FtsZ.

It is found in the cell inner membrane. Its function is as follows. Cell division protein that is involved in the assembly of the Z ring. May serve as a membrane anchor for the Z ring. This Pseudomonas aeruginosa (strain ATCC 15692 / DSM 22644 / CIP 104116 / JCM 14847 / LMG 12228 / 1C / PRS 101 / PAO1) protein is Cell division protein FtsA.